The following is a 260-amino-acid chain: Acetylglutamate kinase (260 aa).

Substrate contacts are provided by residues 46–47 (GG), Arg68, and Asn160.

It belongs to the acetylglutamate kinase family. ArgB subfamily.

It is found in the cytoplasm. It catalyses the reaction N-acetyl-L-glutamate + ATP = N-acetyl-L-glutamyl 5-phosphate + ADP. It functions in the pathway amino-acid biosynthesis; L-arginine biosynthesis; N(2)-acetyl-L-ornithine from L-glutamate: step 2/4. In terms of biological role, catalyzes the ATP-dependent phosphorylation of N-acetyl-L-glutamate. This is Acetylglutamate kinase from Shewanella baltica (strain OS223).